Reading from the N-terminus, the 519-residue chain is Anthranilate synthase component 1 (519 aa).

L-tryptophan is bound by residues serine 39 and 290 to 292 (PYM). Residue 327–328 (GT) coordinates chorismate. Residue glutamate 360 participates in Mg(2+) binding. Chorismate-binding positions include tyrosine 448, arginine 468, 482-484 (GAG), and glycine 484. Glutamate 497 contributes to the Mg(2+) binding site.

This sequence belongs to the anthranilate synthase component I family. Heterotetramer consisting of two non-identical subunits: a beta subunit (TrpG) and a large alpha subunit (TrpE). It depends on Mg(2+) as a cofactor.

It carries out the reaction chorismate + L-glutamine = anthranilate + pyruvate + L-glutamate + H(+). It functions in the pathway amino-acid biosynthesis; L-tryptophan biosynthesis; L-tryptophan from chorismate: step 1/5. With respect to regulation, feedback inhibited by tryptophan. In terms of biological role, part of a heterotetrameric complex that catalyzes the two-step biosynthesis of anthranilate, an intermediate in the biosynthesis of L-tryptophan. In the first step, the glutamine-binding beta subunit (TrpG) of anthranilate synthase (AS) provides the glutamine amidotransferase activity which generates ammonia as a substrate that, along with chorismate, is used in the second step, catalyzed by the large alpha subunit of AS (TrpE) to produce anthranilate. In the absence of TrpG, TrpE can synthesize anthranilate directly from chorismate and high concentrations of ammonia. The protein is Anthranilate synthase component 1 (trpE) of Serratia marcescens.